The following is a 351-amino-acid chain: Peptide chain release factor 1 (351 aa).

Position 229 is an N5-methylglutamine (Q229).

It belongs to the prokaryotic/mitochondrial release factor family. Methylated by PrmC. Methylation increases the termination efficiency of RF1.

It is found in the cytoplasm. Peptide chain release factor 1 directs the termination of translation in response to the peptide chain termination codons UAG and UAA. The protein is Peptide chain release factor 1 of Cereibacter sphaeroides (strain ATCC 17023 / DSM 158 / JCM 6121 / CCUG 31486 / LMG 2827 / NBRC 12203 / NCIMB 8253 / ATH 2.4.1.) (Rhodobacter sphaeroides).